The sequence spans 566 residues: Potassium-transporting ATPase potassium-binding subunit (566 aa).

Transmembrane regions (helical) follow at residues 6–26 (VALL…LGIA), 60–80 (AAAI…LMLF), 128–148 (LGLT…AFVL), 167–187 (IWRI…LFLA), 247–267 (LTNF…CICF), 276–296 (VGSA…LLIM), 331–351 (FGLW…CGAV), 361–381 (LGGL…GGVG), 383–403 (GWYG…LMIG), 423–443 (IGLL…VILP), 492–512 (LMFV…GALI), and 530–550 (LFVG…FIPA).

It belongs to the KdpA family. In terms of assembly, the system is composed of three essential subunits: KdpA, KdpB and KdpC.

The protein localises to the cell inner membrane. Part of the high-affinity ATP-driven potassium transport (or Kdp) system, which catalyzes the hydrolysis of ATP coupled with the electrogenic transport of potassium into the cytoplasm. This subunit binds the periplasmic potassium ions and delivers the ions to the membrane domain of KdpB through an intramembrane tunnel. This chain is Potassium-transporting ATPase potassium-binding subunit, found in Tolumonas auensis (strain DSM 9187 / NBRC 110442 / TA 4).